Reading from the N-terminus, the 125-residue chain is uncharacterized protein (125 aa).

The protein localises to the plastid. This is an uncharacterized protein from Euglena longa (Euglenophycean alga).